The chain runs to 134 residues: Protein NrdI (134 aa).

It belongs to the NrdI family.

Functionally, probably involved in ribonucleotide reductase function. The protein is Protein NrdI of Yersinia enterocolitica serotype O:8 / biotype 1B (strain NCTC 13174 / 8081).